A 196-amino-acid chain; its full sequence is Peptide deformylase (196 aa).

Residues cysteine 97 and histidine 139 each coordinate Fe cation. The active site involves glutamate 140. Fe cation is bound at residue histidine 143. Residues 171 to 187 (LDAQEPKRAPHSPHTDA) are compositionally biased toward basic and acidic residues. A disordered region spans residues 171 to 196 (LDAQEPKRAPHSPHTDAQKPGAASDL).

It belongs to the polypeptide deformylase family. It depends on Fe(2+) as a cofactor.

It carries out the reaction N-terminal N-formyl-L-methionyl-[peptide] + H2O = N-terminal L-methionyl-[peptide] + formate. Its function is as follows. Removes the formyl group from the N-terminal Met of newly synthesized proteins. Requires at least a dipeptide for an efficient rate of reaction. N-terminal L-methionine is a prerequisite for activity but the enzyme has broad specificity at other positions. The protein is Peptide deformylase of Methylocella silvestris (strain DSM 15510 / CIP 108128 / LMG 27833 / NCIMB 13906 / BL2).